A 579-amino-acid chain; its full sequence is Adenine deaminase (579 aa).

This sequence belongs to the metallo-dependent hydrolases superfamily. Adenine deaminase family. Mn(2+) is required as a cofactor.

It catalyses the reaction adenine + H2O + H(+) = hypoxanthine + NH4(+). This is Adenine deaminase from Listeria innocua serovar 6a (strain ATCC BAA-680 / CLIP 11262).